We begin with the raw amino-acid sequence, 392 residues long: Phosphoglycerate kinase (392 aa).

Substrate contacts are provided by residues 21 to 23, arginine 36, 59 to 62, arginine 113, and arginine 146; these read DLN and HLGR. ATP contacts are provided by residues lysine 197, glutamate 319, and 345–348; that span reads GGDT.

It belongs to the phosphoglycerate kinase family. In terms of assembly, monomer.

The protein resides in the cytoplasm. It carries out the reaction (2R)-3-phosphoglycerate + ATP = (2R)-3-phospho-glyceroyl phosphate + ADP. Its pathway is carbohydrate degradation; glycolysis; pyruvate from D-glyceraldehyde 3-phosphate: step 2/5. This chain is Phosphoglycerate kinase, found in Nitrosococcus oceani (strain ATCC 19707 / BCRC 17464 / JCM 30415 / NCIMB 11848 / C-107).